The sequence spans 287 residues: MALSNLKSNRTLSSSLITIFIISLFLQYHNIKSQSSWQSRQVPRSETVAFSITEFEKENPDIFLRGDTSISDGILRLTKTDQSGKPLPNTVGRATYLTPIHIWDKTSGELADFSTSFSFIVNTNDSDLHGDGFAFYLGPLHFDVPKNSSGGYLGLFDPENAFPPSKTPILAIEFDGFTNEWDPPSSFQSPHIGIDVGSIVSLEYAQWPINFVPRNALGEANINYNSESKRLSVFVAYPGTQWNSTRVSVVVDLRSVLPEWVRIGFSATTGELVETHDIINWSFESAL.

Topologically, residues 1–11 (MALSNLKSNRT) are cytoplasmic. Residues 12–31 (LSSSLITIFIISLFLQYHNI) traverse the membrane as a helical segment. Residues 32–287 (KSQSSWQSRQ…IINWSFESAL (256 aa)) are Extracellular-facing. Residues asparagine 124, asparagine 147, asparagine 243, and asparagine 280 are each glycosylated (N-linked (GlcNAc...) asparagine).

Belongs to the leguminous lectin family.

The protein localises to the membrane. Functionally, may be involved in arbuscular mycorrhizal (AM) symbiosis with AM fungi. In Medicago truncatula (Barrel medic), this protein is Lectin 10.